The primary structure comprises 277 residues: ATP synthase subunit delta (277 aa).

It belongs to the ATPase delta chain family. As to quaternary structure, F-type ATPases have 2 components, F(1) - the catalytic core - and F(0) - the membrane proton channel. F(1) has five subunits: alpha(3), beta(3), gamma(1), delta(1), epsilon(1). F(0) has three main subunits: a(1), b(2) and c(10-14). The alpha and beta chains form an alternating ring which encloses part of the gamma chain. F(1) is attached to F(0) by a central stalk formed by the gamma and epsilon chains, while a peripheral stalk is formed by the delta and b chains.

The protein localises to the cell membrane. Its function is as follows. F(1)F(0) ATP synthase produces ATP from ADP in the presence of a proton or sodium gradient. F-type ATPases consist of two structural domains, F(1) containing the extramembraneous catalytic core and F(0) containing the membrane proton channel, linked together by a central stalk and a peripheral stalk. During catalysis, ATP synthesis in the catalytic domain of F(1) is coupled via a rotary mechanism of the central stalk subunits to proton translocation. Functionally, this protein is part of the stalk that links CF(0) to CF(1). It either transmits conformational changes from CF(0) to CF(1) or is implicated in proton conduction. The protein is ATP synthase subunit delta of Frankia alni (strain DSM 45986 / CECT 9034 / ACN14a).